The sequence spans 173 residues: HAM34 protein (173 aa).

Low complexity predominate over residues 22-89 (AAPATTPDTA…ADGTQTATAP (68 aa)). Residues 22-155 (AAPATTPDTA…ATDTTSGASH (134 aa)) are disordered. Residues 95–133 (TEESSASGEMTPTVGTDTSDQVSDSTAAGPSTPEGSMTG) show a composition bias toward polar residues. Over residues 134-155 (TSTPKASDSSSSATDTTSGASH) the composition is skewed to low complexity.

As to expression, germinating spores.

Functionally, could be a structural protein required for the infection process of B.lactucae. The polypeptide is HAM34 protein (HAM34) (Bremia lactucae (Lettuce downy mildew)).